The primary structure comprises 334 residues: Transcription initiation factor IIB (334 aa).

The TFIIB-type zinc finger occupies 34–65; that stretch reads EELVCPMCDSKNIIKDYEKAEIVCEDCGCVLQ. Residues Cys38, Cys41, Cys57, and Cys60 each coordinate Zn(2+). Repeat copies occupy residues 151–234 and 245–326.

This sequence belongs to the TFIIB family.

In terms of biological role, stabilizes TBP binding to an archaeal box-A promoter. Also responsible for recruiting RNA polymerase II to the pre-initiation complex (DNA-TBP-TFIIB). This is Transcription initiation factor IIB from Methanococcus aeolicus (strain ATCC BAA-1280 / DSM 17508 / OCM 812 / Nankai-3).